Reading from the N-terminus, the 387-residue chain is Polyadenylate-binding protein RBP45A (387 aa).

3 RRM domains span residues 60–140, 154–233, and 260–332; these read KSLW…WAQA, HTIF…PAAN, and TTIF…WGRS. Polar residues predominate over residues 329 to 342; it reads WGRSPNKQSDQAQW. The disordered stretch occupies residues 329 to 387; the sequence is WGRSPNKQSDQAQWNGGGYYGYPPQPQGGYGYAAQPPTQDPNAYYGGYTGYGNYQQQRQ.

This sequence belongs to the polyadenylate-binding RBP45 family. Interacts with the poly(A) tail of mRNA in nucleus. Mostly expressed in seedlings, and, to a lower extent, in leaves, stems, and flowers. Present in immature anther tissues (tapetum cells) and mature pollen grains.

It localises to the nucleus. Heterogeneous nuclear ribonucleoprotein (hnRNP)-protein binding the poly(A) tail of mRNA and probably involved in some steps of pre-mRNA maturation. This chain is Polyadenylate-binding protein RBP45A (RBP45A), found in Arabidopsis thaliana (Mouse-ear cress).